We begin with the raw amino-acid sequence, 321 residues long: Lipoyl synthase (321 aa).

The [4Fe-4S] cluster site is built by cysteine 68, cysteine 73, cysteine 79, cysteine 94, cysteine 98, cysteine 101, and serine 308. The 218-residue stretch at 80 to 297 folds into the Radical SAM core domain; sequence FNHGTATFMI…KEIALELGFT (218 aa).

It belongs to the radical SAM superfamily. Lipoyl synthase family. [4Fe-4S] cluster serves as cofactor.

The protein localises to the cytoplasm. The enzyme catalyses [[Fe-S] cluster scaffold protein carrying a second [4Fe-4S](2+) cluster] + N(6)-octanoyl-L-lysyl-[protein] + 2 oxidized [2Fe-2S]-[ferredoxin] + 2 S-adenosyl-L-methionine + 4 H(+) = [[Fe-S] cluster scaffold protein] + N(6)-[(R)-dihydrolipoyl]-L-lysyl-[protein] + 4 Fe(3+) + 2 hydrogen sulfide + 2 5'-deoxyadenosine + 2 L-methionine + 2 reduced [2Fe-2S]-[ferredoxin]. It functions in the pathway protein modification; protein lipoylation via endogenous pathway; protein N(6)-(lipoyl)lysine from octanoyl-[acyl-carrier-protein]: step 2/2. Functionally, catalyzes the radical-mediated insertion of two sulfur atoms into the C-6 and C-8 positions of the octanoyl moiety bound to the lipoyl domains of lipoate-dependent enzymes, thereby converting the octanoylated domains into lipoylated derivatives. The chain is Lipoyl synthase from Aliivibrio fischeri (strain MJ11) (Vibrio fischeri).